The following is a 331-amino-acid chain: CRISPR-associated endonuclease Cas1 (331 aa).

The Mn(2+) site is built by glutamate 166, histidine 228, and aspartate 243.

The protein belongs to the CRISPR-associated endonuclease Cas1 family. Homodimer, forms a heterotetramer with a Cas2 homodimer. It depends on Mg(2+) as a cofactor. Mn(2+) serves as cofactor.

In terms of biological role, CRISPR (clustered regularly interspaced short palindromic repeat), is an adaptive immune system that provides protection against mobile genetic elements (viruses, transposable elements and conjugative plasmids). CRISPR clusters contain spacers, sequences complementary to antecedent mobile elements, and target invading nucleic acids. CRISPR clusters are transcribed and processed into CRISPR RNA (crRNA). Acts as a dsDNA endonuclease. Involved in the integration of spacer DNA into the CRISPR cassette. The sequence is that of CRISPR-associated endonuclease Cas1 from Hyperthermus butylicus (strain DSM 5456 / JCM 9403 / PLM1-5).